Here is a 372-residue protein sequence, read N- to C-terminus: Alginate lyase (372 aa).

The N-terminal stretch at 1 to 22 (MKTRLALPCLLGSLLLSSAVHA) is a signal peptide. Substrate is bound by residues 61–62 (SK), 134–135 (HT), and Tyr-252.

Belongs to the polysaccharide lyase 5 family.

It localises to the periplasm. The catalysed reaction is Eliminative cleavage of alginate to give oligosaccharides with 4-deoxy-alpha-L-erythro-hex-4-enuronosyl groups at their non-reducing ends and beta-D-mannuronate at their reducing end.. Its activity is regulated as follows. Monovalent cations such as potassium and sodium enhance activity, as well as a combined action of these cations with magnesium. However, other cations like calcium, cobalt, manganese and zinc, or the presence of EDTA, do not affect the enzymatic activity. In terms of biological role, catalyzes the depolymerization of alginate by cleaving the beta-1,4 glycosidic bond between two adjacent sugar residues via a beta-elimination mechanism. Degrades deacetylated polymannuronate alginate more efficiently than non-deacetylated polyM. Is able to degrade its own alginate, but at a lower efficiency than that produced from M.pyriferia and P.aeruginosa. May serve to degrade mislocalized alginate that is trapped in the periplasmic space. The sequence is that of Alginate lyase from Azotobacter chroococcum mcd 1.